The sequence spans 339 residues: Protein RecA (339 aa).

Gly-73–Thr-80 is an ATP binding site.

The protein belongs to the RecA family.

The protein localises to the cytoplasm. Can catalyze the hydrolysis of ATP in the presence of single-stranded DNA, the ATP-dependent uptake of single-stranded DNA by duplex DNA, and the ATP-dependent hybridization of homologous single-stranded DNAs. It interacts with LexA causing its activation and leading to its autocatalytic cleavage. The sequence is that of Protein RecA from Mycoplasmopsis pulmonis (strain UAB CTIP) (Mycoplasma pulmonis).